The sequence spans 81 residues: NADH-ubiquinone oxidoreductase chain 6 (81 aa).

The next 3 helical transmembrane spans lie at 1 to 21, 27 to 47, and 48 to 68; these read MTYF…GVAS, YGVV…LSLG, and VSFV…VVFV.

The protein belongs to the complex I subunit 6 family.

It localises to the mitochondrion membrane. The catalysed reaction is a ubiquinone + NADH + 5 H(+)(in) = a ubiquinol + NAD(+) + 4 H(+)(out). Its function is as follows. Core subunit of the mitochondrial membrane respiratory chain NADH dehydrogenase (Complex I) that is believed to belong to the minimal assembly required for catalysis. Complex I functions in the transfer of electrons from NADH to the respiratory chain. The immediate electron acceptor for the enzyme is believed to be ubiquinone. This is NADH-ubiquinone oxidoreductase chain 6 (MT-ND6) from Anas platyrhynchos (Mallard).